The chain runs to 415 residues: 3-isopropylmalate dehydratase large subunit (415 aa).

[4Fe-4S] cluster-binding residues include Cys297, Cys355, and Cys358.

This sequence belongs to the aconitase/IPM isomerase family. LeuC type 2 subfamily. In terms of assembly, heterodimer of LeuC and LeuD. Requires [4Fe-4S] cluster as cofactor.

It carries out the reaction (2R,3S)-3-isopropylmalate = (2S)-2-isopropylmalate. It functions in the pathway amino-acid biosynthesis; L-leucine biosynthesis; L-leucine from 3-methyl-2-oxobutanoate: step 2/4. Catalyzes the isomerization between 2-isopropylmalate and 3-isopropylmalate, via the formation of 2-isopropylmaleate. In Sulfurisphaera tokodaii (strain DSM 16993 / JCM 10545 / NBRC 100140 / 7) (Sulfolobus tokodaii), this protein is 3-isopropylmalate dehydratase large subunit.